The chain runs to 307 residues: Dihydroorotate dehydrogenase A (fumarate) (307 aa).

FMN-binding positions include Ser21 and 46–47; that span reads KT. Residues Lys46, 70-74, and Asn130 contribute to the substrate site; that span reads NSVGL. Asn130 lines the FMN pocket. The active-site Nucleophile is Cys133. 2 residues coordinate FMN: Lys168 and Ile194. Position 195–196 (195–196) interacts with substrate; sequence NT. FMN contacts are provided by residues Gly220, 246-247, and 268-269; these read GG and GS.

It belongs to the dihydroorotate dehydrogenase family. Type 1 subfamily. As to quaternary structure, homodimer. It depends on FMN as a cofactor.

It is found in the cytoplasm. The catalysed reaction is (S)-dihydroorotate + fumarate = orotate + succinate. It functions in the pathway pyrimidine metabolism; UMP biosynthesis via de novo pathway. Catalyzes the conversion of dihydroorotate to orotate with fumarate as the electron acceptor. The polypeptide is Dihydroorotate dehydrogenase A (fumarate) (pyrD) (Lactobacillus delbrueckii subsp. bulgaricus (strain ATCC BAA-365 / Lb-18)).